A 741-amino-acid chain; its full sequence is MEQTYQYAWIIPFLPLPVPMLIGLGLLLFPTATKSLRRMWAFQSVLLLSIVMIFSMNLSIQQINSSSVYQYVWSWIINNDFSLEFGYLIDPLTSIMSILITTVGIMVLIYSDNYMSHDHGYLRFFAYMSFFSTSMLGLVTSSNLIQIYIFWELVGMCSYLLIGFWFTRPVAAKACQKAFVTNRVGDFGLLLGILGFYWITGSFEFRDLFQILNNLISNNEVNFVFVTLCAILLFAGAIAKSAQFPLHVWLPDAMEGPTPISALIHAATMVAAGIFPVARLMPLFIVIPHIMNFISLIGIITVFFGATLALAQKDIKRGLAYSTMSQLGYMMLALGMGSYRSALFHLITHAYSKALLFLGSGSVIHSMETLVGYCPKKSQNMVLMGGLTKHVPITKNSFLLGTLSLCGIPPLACFWSKDEILNDSWLYSPIFAIIAWSTAGLTAFYMCRIYLLTFEGHLNVHFQNYSGKRTTPLYSISLWGKEGSKISNKNFRLVTLLKMKKNGRPSFFSNKVYKMDENVINLIQPFLSIPNFGNTKTYLYPYESDNTMLFPILILILFTLFVGFLGIPFNQDVDILSKWLTPSINLLHQNSNNSIDWYEFCKDAVFSVSIAFFGIFIAFFLYKPVYSSFQNLDLINSFVKMGPKRIFSDKIKNAIYDWSYNRGYVDAFYGTFLTAGVRKLAEFTHFFDRRIIDGIPNGVGFLSFFVAEVIKSVGGGRISSYLFFYFSYVSIFLLIYYFLNL.

The next 16 helical transmembrane spans lie at 9–29 (WIIP…LLLF), 40–60 (WAFQ…NLSI), 89–109 (IDPL…MVLI), 125–145 (FAYM…SNLI), 147–167 (IYIF…FWFT), 185–205 (GDFG…SFEF), 219–239 (NEVN…GAIA), 258–278 (TPIS…FPVA), 284–304 (FIVI…TVFF), 327–347 (LGYM…FHLI), 354–374 (ALLF…VGYC), 396–416 (NSFL…CFWS), 425–445 (WLYS…TAFY), 549–569 (LFPI…GIPF), 605–625 (VFSV…YKPV), and 721–741 (YLFF…FLNL).

This sequence belongs to the complex I subunit 5 family. In terms of assembly, NDH is composed of at least 16 different subunits, 5 of which are encoded in the nucleus.

The protein localises to the plastid. It localises to the chloroplast thylakoid membrane. The catalysed reaction is a plastoquinone + NADH + (n+1) H(+)(in) = a plastoquinol + NAD(+) + n H(+)(out). It catalyses the reaction a plastoquinone + NADPH + (n+1) H(+)(in) = a plastoquinol + NADP(+) + n H(+)(out). In terms of biological role, NDH shuttles electrons from NAD(P)H:plastoquinone, via FMN and iron-sulfur (Fe-S) centers, to quinones in the photosynthetic chain and possibly in a chloroplast respiratory chain. The immediate electron acceptor for the enzyme in this species is believed to be plastoquinone. Couples the redox reaction to proton translocation, and thus conserves the redox energy in a proton gradient. In Guizotia abyssinica (Niger), this protein is NAD(P)H-quinone oxidoreductase subunit 5, chloroplastic (ndhF).